Here is a 1072-residue protein sequence, read N- to C-terminus: DNA-directed RNA polymerase subunit beta (1072 aa).

The protein belongs to the RNA polymerase beta chain family. In terms of assembly, in plastids the minimal PEP RNA polymerase catalytic core is composed of four subunits: alpha, beta, beta', and beta''. When a (nuclear-encoded) sigma factor is associated with the core the holoenzyme is formed, which can initiate transcription.

The protein resides in the plastid. Its subcellular location is the chloroplast. The enzyme catalyses RNA(n) + a ribonucleoside 5'-triphosphate = RNA(n+1) + diphosphate. Functionally, DNA-dependent RNA polymerase catalyzes the transcription of DNA into RNA using the four ribonucleoside triphosphates as substrates. This is DNA-directed RNA polymerase subunit beta from Nasturtium officinale (Watercress).